The following is a 56-amino-acid chain: Large ribosomal subunit protein bL32 (56 aa).

Belongs to the bacterial ribosomal protein bL32 family.

The sequence is that of Large ribosomal subunit protein bL32 from Edwardsiella ictaluri (strain 93-146).